The sequence spans 327 residues: Undecaprenyl-phosphate 4-deoxy-4-formamido-L-arabinose transferase (327 aa).

The next 2 membrane-spanning stretches (helical) occupy residues 235–255 (LLSL…VLLV) and 270–290 (VFTL…GMGL).

The protein belongs to the glycosyltransferase 2 family.

It is found in the cell inner membrane. It catalyses the reaction UDP-4-deoxy-4-formamido-beta-L-arabinose + di-trans,octa-cis-undecaprenyl phosphate = 4-deoxy-4-formamido-alpha-L-arabinopyranosyl di-trans,octa-cis-undecaprenyl phosphate + UDP. It functions in the pathway glycolipid biosynthesis; 4-amino-4-deoxy-alpha-L-arabinose undecaprenyl phosphate biosynthesis; 4-amino-4-deoxy-alpha-L-arabinose undecaprenyl phosphate from UDP-4-deoxy-4-formamido-beta-L-arabinose and undecaprenyl phosphate: step 1/2. The protein operates within bacterial outer membrane biogenesis; lipopolysaccharide biosynthesis. Functionally, catalyzes the transfer of 4-deoxy-4-formamido-L-arabinose from UDP to undecaprenyl phosphate. The modified arabinose is attached to lipid A and is required for resistance to polymyxin and cationic antimicrobial peptides. The chain is Undecaprenyl-phosphate 4-deoxy-4-formamido-L-arabinose transferase from Yersinia pseudotuberculosis serotype IB (strain PB1/+).